A 120-amino-acid chain; its full sequence is NAD(P)H-quinone oxidoreductase subunit 3 (120 aa).

The next 3 helical transmembrane spans lie at 6 to 26 (GYDAFLGFLLISAAVPILALV), 64 to 84 (MFALVFVIFDVETVFLYPWAV), and 89 to 109 (LGLLAFIEALIFIAILLVALA).

It belongs to the complex I subunit 3 family. NDH-1 can be composed of about 15 different subunits; different subcomplexes with different compositions have been identified which probably have different functions.

The protein resides in the cellular thylakoid membrane. It carries out the reaction a plastoquinone + NADH + (n+1) H(+)(in) = a plastoquinol + NAD(+) + n H(+)(out). The catalysed reaction is a plastoquinone + NADPH + (n+1) H(+)(in) = a plastoquinol + NADP(+) + n H(+)(out). In terms of biological role, NDH-1 shuttles electrons from an unknown electron donor, via FMN and iron-sulfur (Fe-S) centers, to quinones in the respiratory and/or the photosynthetic chain. The immediate electron acceptor for the enzyme in this species is believed to be plastoquinone. Couples the redox reaction to proton translocation, and thus conserves the redox energy in a proton gradient. Cyanobacterial NDH-1 also plays a role in inorganic carbon-concentration. The polypeptide is NAD(P)H-quinone oxidoreductase subunit 3 (Prochlorococcus marinus (strain MIT 9313)).